The primary structure comprises 206 residues: Large ribosomal subunit protein uL4 (206 aa).

This sequence belongs to the universal ribosomal protein uL4 family. As to quaternary structure, part of the 50S ribosomal subunit.

In terms of biological role, one of the primary rRNA binding proteins, this protein initially binds near the 5'-end of the 23S rRNA. It is important during the early stages of 50S assembly. It makes multiple contacts with different domains of the 23S rRNA in the assembled 50S subunit and ribosome. Forms part of the polypeptide exit tunnel. In Afipia carboxidovorans (strain ATCC 49405 / DSM 1227 / KCTC 32145 / OM5) (Oligotropha carboxidovorans), this protein is Large ribosomal subunit protein uL4.